We begin with the raw amino-acid sequence, 510 residues long: NAD(P)H-quinone oxidoreductase subunit 2, chloroplastic (510 aa).

Helical transmembrane passes span 24-44 (LLLF…GLIL), 59-79 (WFYF…LFRW), 99-119 (IFQF…VEYI), 124-144 (MAIT…MFLC), 149-169 (XITI…LSGY), 183-203 (YLLM…WLYG), 229-249 (ISIA…PAPF), 295-315 (WHLL…LIAI), 323-343 (MLAY…IVGD), 347-367 (GYAS…GTFA), 395-415 (ALSS…AGFF), 418-438 (LHLF…IGLL), and 484-504 (MTVC…ILAI).

The protein belongs to the complex I subunit 2 family. In terms of assembly, NDH is composed of at least 16 different subunits, 5 of which are encoded in the nucleus.

The protein resides in the plastid. It is found in the chloroplast thylakoid membrane. The enzyme catalyses a plastoquinone + NADH + (n+1) H(+)(in) = a plastoquinol + NAD(+) + n H(+)(out). It catalyses the reaction a plastoquinone + NADPH + (n+1) H(+)(in) = a plastoquinol + NADP(+) + n H(+)(out). Its function is as follows. NDH shuttles electrons from NAD(P)H:plastoquinone, via FMN and iron-sulfur (Fe-S) centers, to quinones in the photosynthetic chain and possibly in a chloroplast respiratory chain. The immediate electron acceptor for the enzyme in this species is believed to be plastoquinone. Couples the redox reaction to proton translocation, and thus conserves the redox energy in a proton gradient. This Narcissus elegans (Daffodil) protein is NAD(P)H-quinone oxidoreductase subunit 2, chloroplastic.